Here is a 350-residue protein sequence, read N- to C-terminus: Putative deoxyribonuclease-2 (350 aa).

This sequence belongs to the DNase II family.

This chain is Putative deoxyribonuclease-2, found in Burkholderia pseudomallei (strain 1710b).